Consider the following 104-residue polypeptide: Large ribosomal subunit protein eL42 (104 aa).

The protein belongs to the eukaryotic ribosomal protein eL42 family. As to quaternary structure, component of the large ribosomal subunit. Mature ribosomes consist of a small (40S) and a large (60S) subunit. The 40S subunit contains about 32 different proteins and 1 molecule of RNA (18S). The 60S subunit contains about 42 different proteins and 3 molecules of RNA (28S, 5.8S and 5S).

The protein localises to the cytoplasm. Functionally, component of the ribosome, a large ribonucleoprotein complex responsible for the synthesis of proteins in the cell. The small ribosomal subunit (SSU) binds messenger RNAs (mRNAs) and translates the encoded message by selecting cognate aminoacyl-transfer RNA (tRNA) molecules. The large subunit (LSU) contains the ribosomal catalytic site termed the peptidyl transferase center (PTC), which catalyzes the formation of peptide bonds, thereby polymerizing the amino acids delivered by tRNAs into a polypeptide chain. The nascent polypeptides leave the ribosome through a tunnel in the LSU and interact with protein factors that function in enzymatic processing, targeting, and the membrane insertion of nascent chains at the exit of the ribosomal tunnel. The protein is Large ribosomal subunit protein eL42 of Plasmodium falciparum (isolate 3D7).